The sequence spans 312 residues: MASYLDFEKNIQQIDEDIINAQIKGDTEAVSILKKNLEKEISKTYKNLSDFQRLQLARHPDRPYTLDYIELILNDAHEIHGDRAFRDDPAIVCFMGYLGEKKIIVIGEQKGRGTKDKIARNFGMPHPEGYRKALRVARLAEKFQIPILFLIDTPGAYPGIGAEERGQSEAIARNLYELSDLKIPTIAIVIGEGGSGGALAIGVADRLAMMKNSVFSVISPEGCAAILWNDPAKSEAATKAMKVTADDLKSQGLIDDVIDEPTNGAHRNKEAAAVAIADYVKKSLNELENIDVRELSANRMQKILKLGAYQEA.

The CoA carboxyltransferase C-terminal domain maps to N36–E286.

This sequence belongs to the AccA family. Acetyl-CoA carboxylase is a heterohexamer composed of biotin carboxyl carrier protein (AccB), biotin carboxylase (AccC) and two subunits each of ACCase subunit alpha (AccA) and ACCase subunit beta (AccD).

It is found in the cytoplasm. The enzyme catalyses N(6)-carboxybiotinyl-L-lysyl-[protein] + acetyl-CoA = N(6)-biotinyl-L-lysyl-[protein] + malonyl-CoA. The protein operates within lipid metabolism; malonyl-CoA biosynthesis; malonyl-CoA from acetyl-CoA: step 1/1. Functionally, component of the acetyl coenzyme A carboxylase (ACC) complex. First, biotin carboxylase catalyzes the carboxylation of biotin on its carrier protein (BCCP) and then the CO(2) group is transferred by the carboxyltransferase to acetyl-CoA to form malonyl-CoA. The sequence is that of Acetyl-coenzyme A carboxylase carboxyl transferase subunit alpha from Campylobacter jejuni subsp. doylei (strain ATCC BAA-1458 / RM4099 / 269.97).